We begin with the raw amino-acid sequence, 203 residues long: Ras-related protein RABD2a (203 aa).

GTP-binding positions include 15-23 (GDSGVGKSC), 33-40 (YVESYIST), 63-67 (DTAGQ), 121-124 (NKSD), and 151-153 (SAK). An Effector region motif is present at residues 37-45 (YISTIGVDF). Positions 176 to 203 (QPAGNNARPPTVQIRGQPVAQKNGCCST) are disordered. S-geranylgeranyl cysteine attachment occurs at residues cysteine 200 and cysteine 201.

It belongs to the small GTPase superfamily. Rab family. As to quaternary structure, does not interact with GC5.

The protein resides in the golgi apparatus. Its subcellular location is the trans-Golgi network membrane. It localises to the golgi apparatus membrane. Protein transport. Regulator of membrane traffic from the Golgi apparatus towards the endoplasmic reticulum (ER). This Arabidopsis thaliana (Mouse-ear cress) protein is Ras-related protein RABD2a (RABD2A).